Reading from the N-terminus, the 100-residue chain is Large ribosomal subunit protein uL23 (100 aa).

This sequence belongs to the universal ribosomal protein uL23 family. As to quaternary structure, part of the 50S ribosomal subunit. Contacts protein L29, and trigger factor when it is bound to the ribosome.

Functionally, one of the early assembly proteins it binds 23S rRNA. One of the proteins that surrounds the polypeptide exit tunnel on the outside of the ribosome. Forms the main docking site for trigger factor binding to the ribosome. The chain is Large ribosomal subunit protein uL23 from Pseudoalteromonas atlantica (strain T6c / ATCC BAA-1087).